The primary structure comprises 451 residues: Chromosomal replication initiator protein DnaA (451 aa).

The interval 1-73 is domain I, interacts with DnaA modulators; that stretch reads MNAHPKEIWE…IRSLQMVTSQ (73 aa). A domain II region spans residues 73 to 112; that stretch reads QKYNVKFLISSELPEEFLTLDTINEQNIKGSIIVSDEMSA. The interval 113-329 is domain III, AAA+ region; sequence MLNPKYTFTS…GALIRIVAFS (217 aa). Residues glycine 157, glycine 159, lysine 160, and threonine 161 each contribute to the ATP site. The segment at 330–451 is domain IV, binds dsDNA; that stretch reads SLTNKEISVD…NDLTKRLDQQ (122 aa).

This sequence belongs to the DnaA family. Oligomerizes as a right-handed, spiral filament on DNA at oriC.

It localises to the cytoplasm. In terms of biological role, plays an essential role in the initiation and regulation of chromosomal replication. ATP-DnaA binds to the origin of replication (oriC) to initiate formation of the DNA replication initiation complex once per cell cycle. Binds the DnaA box (a 9 base pair repeat at the origin) and separates the double-stranded (ds)DNA. Forms a right-handed helical filament on oriC DNA; dsDNA binds to the exterior of the filament while single-stranded (ss)DNA is stabiized in the filament's interior. The ATP-DnaA-oriC complex binds and stabilizes one strand of the AT-rich DNA unwinding element (DUE), permitting loading of DNA polymerase. After initiation quickly degrades to an ADP-DnaA complex that is not apt for DNA replication. Binds acidic phospholipids. The chain is Chromosomal replication initiator protein DnaA from Clostridium kluyveri (strain NBRC 12016).